We begin with the raw amino-acid sequence, 832 residues long: Sodium/hydrogen exchanger 3 (832 aa).

A signal peptide spans 1 to 29; it reads MGRNRSGCVARCVSLTALVLLLCCPVVRS. Topologically, residues 30-66 are extracellular; that stretch reads SEAETDPDSHTEHGDSHGGSREGNDTGFQIVTFRWEH. Residues 31–51 are disordered; sequence EAETDPDSHTEHGDSHGGSRE. Positions 36-51 are enriched in basic and acidic residues; the sequence is PDSHTEHGDSHGGSRE. Residues 67–89 form a helical membrane-spanning segment; sequence VQTPYVIALWILVASLGKIVFHL. The Cytoplasmic portion of the chain corresponds to 90-97; sequence SEKVTSVV. Residues 98 to 117 traverse the membrane as a helical segment; sequence PESALLIVLGLILGGIVWAA. Residues 118-126 lie on the Extracellular side of the membrane; sequence DHSASFTLT. A helical transmembrane segment spans residues 127–144; it reads PTVFFFYLLPPIVLDAGY. Over 145 to 147 the chain is Cytoplasmic; it reads FMP. Residues 148–183 form a helical membrane-spanning segment; sequence NRHFFGNLGTILTYAVIGTVWNAATTGLSLYGVFLL. Residues Gly153, Gly156, and Thr157 each coordinate a 1,2-diacyl-sn-glycero-3-phospho-(1D-myo-inositol). The Extracellular segment spans residues 184 to 196; that stretch reads GLMGDLKAGLLEF. A helical transmembrane segment spans residues 197–218; sequence LLFGSLIAAVDPVAVLAVFEEV. Topologically, residues 219 to 220 are cytoplasmic; that stretch reads HV. A helical transmembrane segment spans residues 221-252; the sequence is NEVLFIIVFGESLLNDAVTVVLYNVFNSFVEV. The Extracellular segment spans residues 253–259; that stretch reads GAGNVQG. The chain crosses the membrane as a helical span at residues 260–294; sequence LDYFKGIVSFFVVSLGGTAVGIIFAFILSLVTRFT. The Cytoplasmic portion of the chain corresponds to 295–296; it reads KH. Residues 297-319 form a helical membrane-spanning segment; sequence VRVIEPGFVFVISYLSYLTADML. Over 320 to 321 the chain is Extracellular; that stretch reads SL. The helical transmembrane segment at 322 to 338 threads the bilayer; it reads SAILAITFCGICCQKYV. Topologically, residues 339 to 345 are cytoplasmic; it reads KANLCEQ. The helical transmembrane segment at 346–374 threads the bilayer; that stretch reads SITTVRYAMKMLASGAETIIFMFLGISAV. Residues 375–382 lie on the Extracellular side of the membrane; the sequence is NPTIWTWN. Residues 383-404 form a helical membrane-spanning segment; the sequence is TAFILLTLVFISVYRVIGVVIQ. The Cytoplasmic portion of the chain corresponds to 405–417; it reads TWILNHYRVVQLE. Residues 418 to 441 form a helical membrane-spanning segment; that stretch reads IIDQVVMSYGGLRGAVAFALVVLL. Over 442-448 the chain is Extracellular; the sequence is DSNYVGE. The chain crosses the membrane as a helical span at residues 449–482; that stretch reads RRLFVSTTIIVVYFTVIFQGLTIKPLVKWLKVKR. The Cytoplasmic portion of the chain corresponds to 483–832; it reads SQHKEPLLNE…PLSFLPESSM (350 aa). The a 1,2-diacyl-sn-glycero-3-phospho-(1D-myo-inositol) site is built by Gln512, Ile513, and His515. Residues 740-760 form a disordered region; sequence TPASNDADETGTGIDNPSFSN.

The protein belongs to the monovalent cation:proton antiporter 1 (CPA1) transporter (TC 2.A.36) family. In terms of assembly, homodimer. As to expression, detected in early distal renal tubules in the kidney bundle zone, in proximal and late distal tubules in the kidney sinus zone, in absorptive epithelial cells of the intestine and in rectal epithelium (at protein level). Isoform 1 is expressed strongly in the gills, at intermediate levels in the kidney, spleen, rectum, spiral intestine and skin, and weakly in the brain, blood and rectal gland. Isoform 2 is expressed strongly in the kidney, rectum and spiral intestine, and weakly in muscles and the rectal gland.

Its subcellular location is the apical cell membrane. The protein resides in the cell membrane. The protein localises to the recycling endosome membrane. It localises to the early endosome membrane. The catalysed reaction is Na(+)(in) + H(+)(out) = Na(+)(out) + H(+)(in). With respect to regulation, seems to switch between active and inactive modes in response to various stimuli. Activated directly or indirectly by membrane phosphatidylinositol (PIs). Regulated by a variety of auxiliary proteins, which facilitate the maturation, cell surface expression and function of the transporter. Inhibited specifically by the drug tenapanor. Functionally, plasma membrane Na(+)/H(+) antiporter. Exchanges intracellular H(+) ions for extracellular Na(+) in 1:1 stoichiometry, playing a key role in salt and fluid absorption and pH homeostasis. Major apical Na(+)/H(+) exchanger in kidney and intestine playing an important role in renal and intestine Na(+) absorption and blood pressure regulation. The polypeptide is Sodium/hydrogen exchanger 3 (Triakis scyllium (Banded houndshark)).